The primary structure comprises 655 residues: MAAAAAASHLNLDALREVLECPICMESFTEEQLRPKLLHCGHTICRQCLEKLLASSINGVRCPFCSKITRITSLTQLTDNLTVLKIIDTAGLSEAVGLLMCRGCGRRLPRQFCRSCGVVLCEPCREADHQPPGHCTLPVKEAAEERRRDFGEKLTRLRELTGELQRRKAALEGVSRDLQARYKAVLQEYGHEERRIQEELARSRKFFTGSLAEVEKSNSQVVEEQSYLLNIAEVQAVSRCDYFLAKIKQADVALLEETADEEEPELTASLPRELTLQDVELLKVGHVGPLQIGQAVKKPRTVNMEDSWAGEEGAASSASASVTFREMDMSPEEVAPSPRASPAKQRSSEAASGIQQCLFLKKMGAKGSTPGMFNLPVSLYVTSQSEVLVADRGNYRIQVFNRKGFLKEIRRSPSGIDSFVLSFLGADLPNLTPLSVAMNCHGLIGVTDSYDNSLKVYTMDGHCVACHRSQLSKPWGITALPSGQFVVTDVEGGKLWCFTVDRGAGVVKYSCLCSAVRPKFVTCDAEGTVYFTQGLGLNVENRQNEHHLEGGFSIGSVGPDGQLGRQISHFFSENEDFRCIAGMCVDARGDLIVADSSRKEILHFPKGGGYSVLIREGLTCPVGIALTPKGQLLVLDCWDHCVKIYSYHLRRYSTP.

An RING-type zinc finger spans residues 21 to 66 (CPICMESFTEEQLRPKLLHCGHTICRQCLEKLLASSINGVRCPFCS). The residue at position 56 (Ser56) is a Phosphoserine; by CHEK2. The segment at 96–139 (VGLLMCRGCGRRLPRQFCRSCGVVLCEPCREADHQPPGHCTLPV) adopts a B box-type; atypical zinc-finger fold. Positions 101, 104, 124, and 129 each coordinate Zn(2+). Positions 139–198 (VKEAAEERRRDFGEKLTRLRELTGELQRRKAALEGVSRDLQARYKAVLQEYGHEERRIQE) form a coiled coil. Residues 327–347 (MDMSPEEVAPSPRASPAKQRS) form a disordered region. A phosphoserine mark is found at Ser330, Ser337, and Ser341. NHL repeat units lie at residues 360–403 (LKKM…FNRK), 417–460 (DSFV…YTMD), 461–501 (GHCV…FTVD), 564–607 (GRQI…FPKG), and 608–648 (GGYS…YSYH).

Belongs to the TRIM/RBCC family. In terms of assembly, it self-associates. Interacts with DTNBP1. Interacts with PIAS4/PIASY upon treatment with UVB and TNF-alpha. Interacts with AMBRA1; promoting activation of ULK1 through unanchored 'Lys-63'-linked polyubiquitin chains. Interacts with TICAM1 and TAX1BP1; these interactions target TICAM1 to TAX1BP1-mediated selective autophagic degradation. Ubiquitinated. In terms of processing, phosphorylation at Ser-56 by CHEK2 under oxidative stress, activates the E3 ligase activity and promotes ATG7 ubiquitination leading to positive regulation of the autophagosme assembly. As to expression, ubiquitous. High expression in brain.

It localises to the cytoplasm. The catalysed reaction is S-ubiquitinyl-[E2 ubiquitin-conjugating enzyme]-L-cysteine + [acceptor protein]-L-lysine = [E2 ubiquitin-conjugating enzyme]-L-cysteine + N(6)-ubiquitinyl-[acceptor protein]-L-lysine.. Its pathway is protein modification; protein ubiquitination. E3 ubiquitin ligase that plays a role in various biological processes including neural stem cell differentiation, innate immunity, inflammatory resonse and autophagy. Plays a role in virus-triggered induction of IFN-beta and TNF-alpha by mediating the ubiquitination of STING1. Mechanistically, targets STING1 for 'Lys-63'-linked ubiquitination which promotes the interaction of STING1 with TBK1. Regulates bacterial clearance and promotes autophagy in Mycobacterium tuberculosis-infected macrophages. Negatively regulates TLR3/4-mediated innate immune and inflammatory response by triggering the autophagic degradation of TICAM1 in an E3 activity-independent manner. Plays an essential role in oxidative stress induced cell death by inducing loss of transmembrane potential and enhancing mitochondrial reactive oxygen species (ROS) production during oxidative stress conditions. Ubiquitinates XIAP and targets it for proteasomal degradation. Ubiquitinates DTNBP1 (dysbindin) and promotes its degradation. May ubiquitinate BBS2. Ubiquitinates PIAS4/PIASY and promotes its degradation in keratinocytes treated with UVB and TNF-alpha. Also acts as a regulator of autophagy by mediating formation of unanchored 'Lys-63'-linked polyubiquitin chains that activate ULK1: interaction with AMBRA1 is required for ULK1 activation. Positively regulates dendritic branching by promoting ubiquitination and subsequent degradation of the epigenetic factor CDYL. Under metabolic stress and phosphorylation by CHK2, mediates 'Lys-63'-linked ubiquitination of ATG7 at 'Lys-41' to initiate autophagy. This Mus musculus (Mouse) protein is E3 ubiquitin-protein ligase TRIM32.